We begin with the raw amino-acid sequence, 316 residues long: MAPKAKIVLVGSGMIGGVMATLIVQKNLGDVVLFDIVKNMPHGKALDTSHTNVMAYSNCKVSGSNTYDDLAGADVVIVTAGFTKAPGKSDKEWNRDDLLPLNNKIMIEIGGHIKKNCPNAFIIVVTNPVDVMVQLLHQHSGVPKNKIIGLGGVLDTSRLKYYISQKLNVCPRDVNAHIVGAHGNKMVLLKRYITVGGIPLQEFINNKLISDAELEAIFDRTVNTALEIVNLHASPYVAPAAAIIEMAESYLKDLKKVLICSTLLEGQYGHSDIFGGTPVVLGANGVEQVIELQLNSEEKAKFDEAIAETKRMKALA.

Residues Met-14, 14–150 (MIGG…IIGL), Ile-15, Asp-35, Tyr-67, Gly-81, Phe-82, Val-125, Asn-127, and Leu-150 contribute to the NAD(+) site. Arg-95 serves as a coordination point for substrate. Substrate contacts are provided by Arg-158 and His-182. The Proton acceptor role is filled by His-182.

Belongs to the LDH/MDH superfamily. LDH family. As to quaternary structure, homotetramer.

It carries out the reaction (S)-lactate + NAD(+) = pyruvate + NADH + H(+). It functions in the pathway fermentation; pyruvate fermentation to lactate; (S)-lactate from pyruvate: step 1/1. This chain is L-lactate dehydrogenase, found in Plasmodium falciparum (isolate CDC / Honduras).